A 351-amino-acid polypeptide reads, in one-letter code: Anthranilate phosphoribosyltransferase (351 aa).

5-phospho-alpha-D-ribose 1-diphosphate-binding positions include G80, G83–D84, T88, N90–T93, K108–S116, and S120. G80 provides a ligand contact to anthranilate. Position 92 (S92) interacts with Mg(2+). Residue N111 coordinates anthranilate. R166 contacts anthranilate. D229 and E230 together coordinate Mg(2+).

This sequence belongs to the anthranilate phosphoribosyltransferase family. As to quaternary structure, homodimer. Mg(2+) serves as cofactor.

It carries out the reaction N-(5-phospho-beta-D-ribosyl)anthranilate + diphosphate = 5-phospho-alpha-D-ribose 1-diphosphate + anthranilate. Its pathway is amino-acid biosynthesis; L-tryptophan biosynthesis; L-tryptophan from chorismate: step 2/5. Catalyzes the transfer of the phosphoribosyl group of 5-phosphorylribose-1-pyrophosphate (PRPP) to anthranilate to yield N-(5'-phosphoribosyl)-anthranilate (PRA). The polypeptide is Anthranilate phosphoribosyltransferase (Prosthecochloris aestuarii (strain DSM 271 / SK 413)).